The primary structure comprises 271 residues: Proteasome inhibitor PI31 subunit (271 aa).

The residue at position 2 (A2) is an N-acetylalanine. An important for homodimerization and interaction with FBXO7 region spans residues 2-150; it reads AGLEVLFASA…PIHEQWEKAN (149 aa). Phosphoserine is present on S153. R205 is subject to Omega-N-methylarginine. R219 is modified (asymmetric dimethylarginine). The tract at residues 222–271 is disordered; that stretch reads IDPSSGLPNRLPPGAVPPGARFDPFGPIGTSPPGPNPDHLPPPGYDDMYL. R231 is subject to Omega-N-methylarginine. Over residues 251–265 the composition is skewed to pro residues; it reads TSPPGPNPDHLPPPG. A Phosphoserine modification is found at S252.

Belongs to the proteasome inhibitor PI31 family. Monomer and homodimer. Interacts with FBXO7. Interacts with the 20S proteasome.

It is found in the cytoplasm. The protein localises to the endoplasmic reticulum. In terms of biological role, plays an important role in control of proteasome function. Inhibits the hydrolysis of protein and peptide substrates by the 20S proteasome. Also inhibits the activation of the proteasome by the proteasome regulatory proteins PA700 and PA28. The protein is Proteasome inhibitor PI31 subunit (PSMF1) of Homo sapiens (Human).